A 111-amino-acid polypeptide reads, in one-letter code: MTGGLIAAGLGLAAVGFGARYVLRNQALIKKGMEALPVAGGLNSYYRGGFDQKMSRSEAAKILGITPSAKPAKIKDAHKKVMIVNHPDRGGSPYLAAKINEAKDLMESTKS.

Over 1-3 the chain is Mitochondrial intermembrane; it reads MTG. The chain crosses the membrane as a helical span at residues 4–24; sequence GLIAAGLGLAAVGFGARYVLR. The Mitochondrial matrix segment spans residues 25 to 111; that stretch reads NQALIKKGME…AKDLMESTKS (87 aa). One can recognise a J domain in the interval 58–111; that stretch reads EAAKILGITPSAKPAKIKDAHKKVMIVNHPDRGGSPYLAAKINEAKDLMESTKS.

This sequence belongs to the TIM14 family. As to quaternary structure, probable component of the PAM complex at least composed of a mitochondrial HSP70 protein, GrpE, tim-44, tim-16 and tim-14.

The protein localises to the mitochondrion inner membrane. Functionally, probable component of the PAM complex, a complex required for the translocation of transit peptide-containing proteins from the inner membrane into the mitochondrial matrix in an ATP-dependent manner. May act as a co-chaperone that stimulate the ATP-dependent activity. The chain is Mitochondrial import inner membrane translocase subunit TIM14 (dnj-21) from Caenorhabditis briggsae.